We begin with the raw amino-acid sequence, 158 residues long: Snaclec convulxin subunit alpha (158 aa).

The signal sequence occupies residues 1 to 23 (MGRFIFVSFGLLVLFLSLSGTGA). Disulfide bonds link Cys27–Cys38, Cys55–Cys152, and Cys127–Cys144. The C-type lectin domain maps to 34–158 (YDQHCYRIFN…PFVCKFPPQC (125 aa)).

It belongs to the snaclec family. Tetramer of heterodimers of alpha and beta subunits (alphabeta)(4); disulfide-linked. As to expression, expressed by the venom gland.

Its subcellular location is the secreted. Its function is as follows. Snake venom lectin that activates platelets by binding to the platelet collagen receptor glycoprotein VI (GP6). The indirect activation of integrin alpha-IIb/beta-3 (ITGA2B/ITGB3) also induced by the toxin is upstream the cytoskeletal translocation of GPIb, FcRgamma (FCER1G) and 14-3-3zeta (YWHAZ). The polypeptide is Snaclec convulxin subunit alpha (Crotalus durissus terrificus (South American rattlesnake)).